A 179-amino-acid polypeptide reads, in one-letter code: MINFLLFVLTILATLTNIWFSGVLSPAMVIRICLGGSMVVLQIWSFSRPISNETFRTKLLLEVITHRPSIAGKEWKTITYNMNQYLFKAGLWKTPYHFFCEHQCYEFFKDLIKGKYPDVQWDTANTQPFISVPENQAATQNSDVEPTVKWCLFKAAEIQAHAVREYWQSQYPDVGIPAI.

The next 2 helical transmembrane spans lie at phenylalanine 4 to leucine 24 and proline 26 to phenylalanine 46.

It belongs to the DUP/COS family.

Its subcellular location is the membrane. This chain is Putative DUP240 protein DFP1, found in Saccharomyces cerevisiae (strain ATCC 204508 / S288c) (Baker's yeast).